A 1350-amino-acid polypeptide reads, in one-letter code: ABC-type transporter MDR1 (1350 aa).

The span at 1–11 (MDTVHEGHHGS) shows a compositional bias: basic and acidic residues. Residues 1–84 (MDTVHEGHHG…DEGEDPFAHL (84 aa)) are disordered. The span at 22–33 (VEVTNYEKTQLG) shows a compositional bias: polar residues. Over residues 52–63 (KKHKSQKEKKHK) the composition is skewed to basic residues. The ABC transmembrane type-1 1 domain maps to 121 to 411 (VLSALSSIIG…VAPNIQAFTT (291 aa)). The next 6 membrane-spanning stretches (helical) occupy residues 124–144 (ALSS…FGGL), 170–190 (LYFL…TAGF), 243–263 (KVGL…VSFI), 271–291 (ILMS…GFIV), 350–370 (GSMI…AFWM), and 380–400 (IEVG…FALG). One can recognise an ABC transporter 1 domain in the interval 446–691 (IELRNIRHIY…QGAYYNLVEA (246 aa)). 481–488 (GESGSGKS) lines the ATP pocket. Over residues 712-731 (KDQNLKHETTKGEQPEDGLK) the composition is skewed to basic and acidic residues. The disordered stretch occupies residues 712–734 (KDQNLKHETTKGEQPEDGLKLAR). Helical transmembrane passes span 779 to 799 (IGII…VFFA), 830 to 850 (FMLA…FAVC), 903 to 923 (LGTI…SLAI), 929 to 949 (LVCI…FWML), 1014 to 1034 (ASQS…GTLI), and 1044 to 1064 (FFLC…IFSF). An ABC transmembrane type-1 2 domain is found at 779 to 1070 (IGIICSVITG…IFSFAPDMGK (292 aa)). The 239-residue stretch at 1105–1343 (IEFRDVHFRY…RGRYWELVNL (239 aa)) folds into the ABC transporter 2 domain. Residue Asn-1127 is glycosylated (N-linked (GlcNAc...) asparagine). Residue 1140 to 1147 (GASGCGKS) coordinates ATP.

Belongs to the ABC transporter superfamily. ABCB family. Multidrug resistance exporter (TC 3.A.1.201) subfamily.

The protein localises to the cell membrane. Functionally, ABC-type transporter that is involved in the secretion of liamocins, glycolipids (also called heavy oils) composed of a single mannitol or arabitol headgroup linked to either three, four or even six 3,5-dihydroxydecanoic ester tail-groups. The protein is ABC-type transporter MDR1 of Aureobasidium melanogenum (Aureobasidium pullulans var. melanogenum).